The following is a 322-amino-acid chain: MTSHLKKVELHCHLEGAAPPALTAAQARKYGVDISAELRDGAYVWHDFASFLVCYDKVSEVYRTEEDYALLTETYLDELAGIDTIYSELIVSPDHGKRIGLGADAYISGICEGIRRAREKSGIEARLIVTGERHFGPESVIGAAEYAARAANPLITGFNLAGEERMGRVADYARAFDIARDAGLGLTIHAGEVCGAFSVADALDAVRPSRIGHGVRAIEDLDLVTRLADLGTVLEICPGSNIALGVFPDFASHPLRRLKDAGVRVTISSDDPPFFHTSLKREYELAAGTFGFGDAEIDAMTRTAIEAAFVDDETRKALLARI.

Zn(2+) contacts are provided by histidine 11, histidine 13, and histidine 189. Residue glutamate 192 is the Proton donor of the active site. Residue aspartate 270 participates in Zn(2+) binding. A substrate-binding site is contributed by aspartate 271.

This sequence belongs to the metallo-dependent hydrolases superfamily. Adenosine and AMP deaminases family. Adenine deaminase type 2 subfamily. It depends on Zn(2+) as a cofactor.

It catalyses the reaction adenine + H2O + H(+) = hypoxanthine + NH4(+). Functionally, catalyzes the hydrolytic deamination of adenine to hypoxanthine. Plays an important role in the purine salvage pathway and in nitrogen catabolism. This chain is Adenine deaminase, found in Rhizobium johnstonii (strain DSM 114642 / LMG 32736 / 3841) (Rhizobium leguminosarum bv. viciae).